Reading from the N-terminus, the 218-residue chain is Ras-related protein R-Ras (218 aa).

Positions 1–30 (MSSGAASGTGRGRPRGGGPGPGDPPPSETH) are disordered. A compositionally biased stretch (gly residues) spans 7 to 20 (SGTGRGRPRGGGPG). 36 to 44 (GGGGVGKSA) is a binding site for GTP. The short motif at 58–66 (YDPTIEDSY) is the Effector region element. GTP is bound by residues 83 to 87 (DTAGQ), 142 to 145 (NKAD), and 172 to 174 (SAK). Cys-215 carries the post-translational modification Cysteine methyl ester. Cys-215 carries the S-geranylgeranyl cysteine lipid modification. Positions 216-218 (VLL) are cleaved as a propeptide — removed in mature form.

Belongs to the small GTPase superfamily. Ras family. Interacts with PLCE1. Interacts (active GTP-bound form preferentially) with RGS14. Interacts with OSBPL3. Interacts with ZDHHC19. In terms of processing, S-palmitoylated by ZDHHC19, leading to increased association with membranes and with rafts/caveolae as well as enhanced cell viability.

The protein resides in the cell membrane. The catalysed reaction is GTP + H2O = GDP + phosphate + H(+). In terms of biological role, GTP-binding protein with GTPase activity, likely involved in the regulation of MAPK signaling pathway and thereby controlling multiple cellular processes. Regulates the organization of the actin cytoskeleton. With OSPBL3, modulates integrin beta-1 (ITGB1) activity. This Homo sapiens (Human) protein is Ras-related protein R-Ras (RRAS).